We begin with the raw amino-acid sequence, 240 residues long: Probable alpha-aspartyl dipeptidase (240 aa).

Active-site charge relay system residues include serine 125, aspartate 140, and histidine 162.

This sequence belongs to the peptidase S51 family.

The protein localises to the cytoplasm. The catalysed reaction is Dipeptidase E catalyzes the hydrolysis of dipeptides Asp-|-Xaa. It does not act on peptides with N-terminal Glu, Asn or Gln, nor does it cleave isoaspartyl peptides.. Hydrolyzes dipeptides containing N-terminal aspartate residues. This Drosophila melanogaster (Fruit fly) protein is Probable alpha-aspartyl dipeptidase.